A 360-amino-acid polypeptide reads, in one-letter code: DNA replication and repair protein RecF (360 aa).

Residue 33–40 (GENGSGKT) participates in ATP binding.

The protein belongs to the RecF family.

It is found in the cytoplasm. In terms of biological role, the RecF protein is involved in DNA metabolism; it is required for DNA replication and normal SOS inducibility. RecF binds preferentially to single-stranded, linear DNA. It also seems to bind ATP. This chain is DNA replication and repair protein RecF, found in Rickettsia peacockii (strain Rustic).